The primary structure comprises 540 residues: Early growth response protein 1 (540 aa).

Disordered stretches follow at residues 1–105 and 162–240; these read MAAA…AESF and VSMT…PAYP. The span at 64 to 75 shows a compositional bias: gly residues; it reads SSGGGGGGGGGS. Residues 167 to 190 show a composition bias toward low complexity; it reads PPATSSSASSPAASSSASQSPPLS. Residues 192–201 are compositionally biased toward polar residues; that stretch reads AVQSNDSSPI. Lysine 304 is covalently cross-linked (Glycyl lysine isopeptide (Lys-Gly) (interchain with G-Cter in SUMO2)). Residues 317-337 form a disordered region; it reads PSRMRKYPNRPSKTPPHERPY. The C2H2-type 1 zinc finger occupies 337–361; the sequence is YACPVESCDRRFSRSDELTRHIRIH. Residues 366-388 form a C2H2-type 2; degenerate zinc finger; the sequence is PQCRISMRNFSRSDHLTTHIRTH. Residues 394–416 form a C2H2-type 3 zinc finger; it reads FACDICGRKFARSDERKRHTKIH. The tract at residues 407 to 482 is disordered; that stretch reads DERKRHTKIH…SPGSSTYPSP (76 aa). The span at 411 to 421 shows a compositional bias: basic residues; that stretch reads RHTKIHLRQKD. Low complexity predominate over residues 427–482; the sequence is SAASAATSSLPSYPSPVATSYPSPATTSYPSPATTSYPSPVPTSYSSPGSSTYPSP.

This sequence belongs to the EGR C2H2-type zinc-finger protein family. As to quaternary structure, interacts with SNAI1 and SP1 upon 12-O-tetradecanoylphorbol-13-acetate (TPA) induction.

Its subcellular location is the nucleus. It localises to the cytoplasm. In terms of biological role, transcriptional regulator. Recognizes and binds to the DNA sequence 5'-GCG(T/G)GGGCG-3'(EGR-site) in the promoter region of target genes. Binds double-stranded target DNA, irrespective of the cytosine methylation status. Regulates the transcription of numerous target genes, and thereby plays an important role in regulating the response to growth factors, DNA damage, and ischemia. Plays a role in the regulation of cell survival, proliferation and cell death. Activates expression of p53/TP53 and TGFB1, and thereby helps prevent tumor formation. Required for normal progress through mitosis and normal proliferation of hepatocytes after partial hepatectomy. Mediates responses to ischemia and hypoxia; regulates the expression of proteins such as IL1B and CXCL2 that are involved in inflammatory processes and development of tissue damage after ischemia. Regulates biosynthesis of luteinizing hormone (LHB) in the pituitary. Regulates the amplitude of the expression rhythms of clock genes: BMAL1, PER2 and NR1D1 in the liver via the activation of PER1 (clock repressor) transcription. Regulates the rhythmic expression of core-clock gene BMAL1 in the suprachiasmatic nucleus (SCN). The protein is Early growth response protein 1 (EGR1) of Bos taurus (Bovine).